Consider the following 586-residue polypeptide: MAPVSIADLVAALPSEDSWGPATPSDNMLEGVPYAPFSKGDKLGRMADWTSDSKDRDRAGRQAYNRNYRDQQVYGAGTSSLFNVQVAEDESSFSVVDNTRTTTKRTFGRGGGTVFRGRAQRGGAGQRGGRAGFQRVGAGRGQGGDRYYDNRGGRGNRGRRSGWKDYDKPQRTREPSVNVRPDWTMLEEVDFSRLSKLNLEAPEGEDLDSYGFLYYYDRSYDKAPVKNAERRLQALDRAAYNVTTTQDPIIQELAEKNEATVFATSDILSMLMCAPRSVYSWDIVIVHQGNKIYFDKREGASIDLVTVNENAADAPLEVTDSSGKQESLNTPSALALEATFINHNFALQTVVESEDSKVGFSHPNPFYNASEETEPLASKGYKYRRFDMSLQEDEEPLNLIVRTEVDAVMKNPVSGEEQQLVVKALNEFDSKAPGSGGALDWRSKLWSQRGAVVATEMKNNSIKLARWATQAILAKADAMKLGFVSRANPRSAAGHVVLGVVSYKPRDLAAQMNLNLGNGWGIVRTIVDRIQALDANEEEDKVTKYVLIKDPNRPVLRLYSVPANTFEEDDEAADEQEEKATEESEE.

Disordered stretches follow at residues 16–37 and 104–176; these read EDSW…YAPF and KRTF…REPS. The span at 108 to 131 shows a compositional bias: gly residues; sequence GRGGGTVFRGRAQRGGAGQRGGRA. A compositionally biased stretch (basic and acidic residues) spans 162-174; it reads GWKDYDKPQRTRE. The RNA gate stretch occupies residues 301 to 315; it reads SIDLVTVNENAADAP. The disordered stretch occupies residues 563–586; it reads ANTFEEDDEAADEQEEKATEESEE. Over residues 566–577 the composition is skewed to acidic residues; sequence FEEDDEAADEQE.

The protein belongs to the eIF-3 subunit D family. In terms of assembly, component of the eukaryotic translation initiation factor 3 (eIF-3) complex.

The protein resides in the cytoplasm. MRNA cap-binding component of the eukaryotic translation initiation factor 3 (eIF-3) complex, which is involved in protein synthesis of a specialized repertoire of mRNAs and, together with other initiation factors, stimulates binding of mRNA and methionyl-tRNAi to the 40S ribosome. The eIF-3 complex specifically targets and initiates translation of a subset of mRNAs involved in cell proliferation. In the eIF-3 complex, eif3d specifically recognizes and binds the 7-methylguanosine cap of a subset of mRNAs. The sequence is that of Eukaryotic translation initiation factor 3 subunit D from Aspergillus clavatus (strain ATCC 1007 / CBS 513.65 / DSM 816 / NCTC 3887 / NRRL 1 / QM 1276 / 107).